Here is an 86-residue protein sequence, read N- to C-terminus: Large ribosomal subunit protein bL31B (86 aa).

Belongs to the bacterial ribosomal protein bL31 family. Type B subfamily. Part of the 50S ribosomal subunit.

The protein is Large ribosomal subunit protein bL31B of Ralstonia pickettii (strain 12J).